The sequence spans 68 residues: MAVPQNRVTRSRRNMRRSHDALVASNPAECPNCGELKRPHHVCGACGHYDSREVVAVTAETDLDEDAA.

The interval 1-20 (MAVPQNRVTRSRRNMRRSHD) is disordered.

This sequence belongs to the bacterial ribosomal protein bL32 family.

This is Large ribosomal subunit protein bL32 from Cereibacter sphaeroides (strain ATCC 17029 / ATH 2.4.9) (Rhodobacter sphaeroides).